The chain runs to 279 residues: Lyso-glycine lipid O-acyltransferase (279 aa).

This sequence belongs to the O-acyltransferase GlsA family.

It carries out the reaction a lyso-glycine lipid + a fatty acyl-[ACP] = a glycine lipid + holo-[ACP]. The enzyme catalyses N-[(3R)-3-hydroxyhexadecanoyl]-glycine + hexadecanoyl-[ACP] = N-[(3R)-3-(hexadecanoyloxy)hexadecanoyl]-glycine + holo-[ACP]. The protein operates within lipid metabolism. Is involved in the production of glycine lipids (GL), which are phosphorus-free membrane lipids. Catalyzes the second step of GL biosynthesis, i.e. the O-acylation of the hydroxyl group of lyso-glycine lipids, resulting in the production of the mature diacylated glycine lipids. This is Lyso-glycine lipid O-acyltransferase from Phocaeicola vulgatus (strain ATCC 8482 / DSM 1447 / JCM 5826 / CCUG 4940 / NBRC 14291 / NCTC 11154) (Bacteroides vulgatus).